Reading from the N-terminus, the 340-residue chain is MALKEGLRAWKRIFWRQILLTLGLLGLFLYGLPKFRHLEALIPMGVCPSATMSQLRDNFTGALRPWARPEVLTCTPWGAPIIWDGSFDPDVAKQEARQQNLTIGLTIFAVGRYLEKYLERFLETAEQHFMAGQSVMYYVFTELPGAVPRVALGPGRRLPVERVARERRWQDVSMARMRTLHAALGGLPGREAHFMFCMDVDQHFSGTFGPEALAESVAQLHSWHYHWPSWLLPFERDAHSAAAMAWGQGDFYNHAAVFGGSVAALRGLTAHCAGGLDWDRARGLEARWHDESHLNKFFWLHKPAKVLSPEFCWSPDIGPRAEIRRPRLLWAPKGYRLLRN.

Topologically, residues 1–12 (MALKEGLRAWKR) are cytoplasmic. Residues 13–32 (IFWRQILLTLGLLGLFLYGL) traverse the membrane as a helical; Signal-anchor for type II membrane protein segment. The Lumenal segment spans residues 33-340 (PKFRHLEALI…APKGYRLLRN (308 aa)). Asn58 and Asn100 each carry an N-linked (GlcNAc...) asparagine glycan. Mn(2+)-binding residues include Asp199 and Asp201.

This sequence belongs to the glycosyltransferase 6 family. Mn(2+) serves as cofactor. In terms of tissue distribution, expressed in thymus and monocyte derived dendritic cells.

It is found in the golgi apparatus. The protein resides in the golgi stack membrane. The catalysed reaction is a beta-D-galactosyl-(1-&gt;4)-N-acetyl-beta-D-glucosaminyl derivative + UDP-alpha-D-galactose = an alpha-D-galactosyl-(1-&gt;3)-beta-D-galactosyl-(1-&gt;4)-N-acetyl-beta-D-glucosaminyl derivative + UDP + H(+). It catalyses the reaction a beta-D-Gal-(1-&gt;4)-beta-D-Glc-(1&lt;-&gt;1)-Cer(d18:1(4E)) + UDP-alpha-D-galactose = an isogloboside iGb3Cer (d18:1(4E)) + UDP + H(+). The enzyme catalyses a globoside Gb3Cer + UDP-alpha-D-galactose = a globoside GalGb3Cer + UDP + H(+). Synthesizes the galactose-alpha(1,3)-galactose group on the glycosphingolipid isoglobotrihexosylceramide or isogloboside 3 (iGb3) by catalyzing the transfer of galactose from UDP-Galactose to its acceptor molecule Gal-beta-1,4-Glc-ceramide. Can also catalyze the addition of galactose to iGb3 itself to form polygalactose structures. The polypeptide is Alpha-1,3-galactosyltransferase 2 (Homo sapiens (Human)).